The following is a 315-amino-acid chain: Lipoyl synthase (315 aa).

[4Fe-4S] cluster contacts are provided by C62, C67, C73, C88, C92, C95, and S302. The Radical SAM core domain occupies 73–291; sequence CFGHGTATFM…GELAKKLGFS (219 aa).

This sequence belongs to the radical SAM superfamily. Lipoyl synthase family. [4Fe-4S] cluster serves as cofactor.

Its subcellular location is the cytoplasm. It catalyses the reaction [[Fe-S] cluster scaffold protein carrying a second [4Fe-4S](2+) cluster] + N(6)-octanoyl-L-lysyl-[protein] + 2 oxidized [2Fe-2S]-[ferredoxin] + 2 S-adenosyl-L-methionine + 4 H(+) = [[Fe-S] cluster scaffold protein] + N(6)-[(R)-dihydrolipoyl]-L-lysyl-[protein] + 4 Fe(3+) + 2 hydrogen sulfide + 2 5'-deoxyadenosine + 2 L-methionine + 2 reduced [2Fe-2S]-[ferredoxin]. The protein operates within protein modification; protein lipoylation via endogenous pathway; protein N(6)-(lipoyl)lysine from octanoyl-[acyl-carrier-protein]: step 2/2. Functionally, catalyzes the radical-mediated insertion of two sulfur atoms into the C-6 and C-8 positions of the octanoyl moiety bound to the lipoyl domains of lipoate-dependent enzymes, thereby converting the octanoylated domains into lipoylated derivatives. This chain is Lipoyl synthase, found in Coxiella burnetii (strain Dugway 5J108-111).